The chain runs to 585 residues: ATP-dependent lipid A-core flippase (585 aa).

A run of 6 helical transmembrane segments spans residues 23–43 (LAFG…AYVI), 64–84 (IAAY…FMGT), 140–160 (AFLT…WMFY), 163–183 (WQLS…VSVV), 247–267 (ILSV…VLYI), and 273–293 (FITD…TMLL). Residues 27-308 (VAIIGMVGYS…LTTVNSEFQK (282 aa)) enclose the ABC transmembrane type-1 domain. Positions 340–576 (LEFRDVTFHY…DGAYAQLHKL (237 aa)) constitute an ABC transporter domain. Position 374–381 (374–381 (GRSGSGKS)) interacts with ATP.

The protein belongs to the ABC transporter superfamily. Lipid exporter (TC 3.A.1.106) family. In terms of assembly, homodimer.

Its subcellular location is the cell inner membrane. It carries out the reaction ATP + H2O + lipid A-core oligosaccharideSide 1 = ADP + phosphate + lipid A-core oligosaccharideSide 2.. Its function is as follows. Involved in lipopolysaccharide (LPS) biosynthesis. Translocates lipid A-core from the inner to the outer leaflet of the inner membrane. Transmembrane domains (TMD) form a pore in the inner membrane and the ATP-binding domain (NBD) is responsible for energy generation. The chain is ATP-dependent lipid A-core flippase from Pseudoalteromonas atlantica (strain T6c / ATCC BAA-1087).